Reading from the N-terminus, the 145-residue chain is Large ribosomal subunit protein uL15 (145 aa).

The tract at residues 20–39 is disordered; it reads GRVGKHRKHPSGRGNAGGEH.

The protein belongs to the universal ribosomal protein uL15 family.

The polypeptide is Large ribosomal subunit protein uL15 (RPL27A) (Trypanosoma brucei brucei).